Here is a 135-residue protein sequence, read N- to C-terminus: Ribosome-binding factor A (135 aa).

Belongs to the RbfA family. Monomer. Binds 30S ribosomal subunits, but not 50S ribosomal subunits or 70S ribosomes.

The protein resides in the cytoplasm. One of several proteins that assist in the late maturation steps of the functional core of the 30S ribosomal subunit. Associates with free 30S ribosomal subunits (but not with 30S subunits that are part of 70S ribosomes or polysomes). Required for efficient processing of 16S rRNA. May interact with the 5'-terminal helix region of 16S rRNA. The polypeptide is Ribosome-binding factor A (Rhodopseudomonas palustris (strain HaA2)).